Reading from the N-terminus, the 267-residue chain is Undecaprenyl-diphosphatase (267 aa).

Helical transmembrane passes span 1 to 21, 39 to 59, 83 to 103, 111 to 131, 149 to 169, 189 to 209, 218 to 238, and 245 to 265; these read MSYF…FLPI, QGLA…VLYF, AKLA…GFVM, LRSA…LWYV, ALFI…RSGA, FLMS…KLVT, FLLT…HFFL, and GMTP…AFLL.

It belongs to the UppP family.

It is found in the cell inner membrane. The enzyme catalyses di-trans,octa-cis-undecaprenyl diphosphate + H2O = di-trans,octa-cis-undecaprenyl phosphate + phosphate + H(+). Its function is as follows. Catalyzes the dephosphorylation of undecaprenyl diphosphate (UPP). Confers resistance to bacitracin. This is Undecaprenyl-diphosphatase from Vibrio cholerae serotype O1 (strain ATCC 39315 / El Tor Inaba N16961).